The sequence spans 350 residues: S-adenosylmethionine:tRNA ribosyltransferase-isomerase (350 aa).

The protein belongs to the QueA family. In terms of assembly, monomer.

It localises to the cytoplasm. It carries out the reaction 7-aminomethyl-7-carbaguanosine(34) in tRNA + S-adenosyl-L-methionine = epoxyqueuosine(34) in tRNA + adenine + L-methionine + 2 H(+). It functions in the pathway tRNA modification; tRNA-queuosine biosynthesis. Functionally, transfers and isomerizes the ribose moiety from AdoMet to the 7-aminomethyl group of 7-deazaguanine (preQ1-tRNA) to give epoxyqueuosine (oQ-tRNA). The sequence is that of S-adenosylmethionine:tRNA ribosyltransferase-isomerase from Bacillus cereus (strain G9842).